Here is a 132-residue protein sequence, read N- to C-terminus: uncharacterized protein (132 aa).

Its function is as follows. The presence of the two linear plasmids, termed pGKL1 and pGKL2, in strains of Kluyveromyces lactis confers the killer phenotype to the host cell, by promoting the secretion of a toxin able to inhibit the growth of sensitive strains. This is an uncharacterized protein from Kluyveromyces lactis (strain ATCC 8585 / CBS 2359 / DSM 70799 / NBRC 1267 / NRRL Y-1140 / WM37) (Yeast).